Here is a 94-residue protein sequence, read N- to C-terminus: Integration host factor subunit beta (94 aa).

The protein belongs to the bacterial histone-like protein family. Heterodimer of an alpha and a beta chain.

Its function is as follows. This protein is one of the two subunits of integration host factor, a specific DNA-binding protein that functions in genetic recombination as well as in transcriptional and translational control. The chain is Integration host factor subunit beta from Mannheimia succiniciproducens (strain KCTC 0769BP / MBEL55E).